We begin with the raw amino-acid sequence, 150 residues long: MRNYDLSPLLRQWIGFDKLASSMQGSQEPIDFPPYNIEKKDDNHYRITLALAGFRQSDLDIEVEGPRLTVKGSPAPSEKAVEYLHQGLVFKPFTLSFTLAEHLHVSDAHFENGLLHIDLVRDVPEALQPQRIAIGGGRPALNQQSAEDAS.

The sHSP domain maps to 26 to 137; sequence SQEPIDFPPY…QPQRIAIGGG (112 aa).

It belongs to the small heat shock protein (HSP20) family. As to quaternary structure, homodimer. Forms homomultimers of about 100-150 subunits at optimal growth temperatures. Conformation changes to oligomers at high temperatures or high ionic concentrations. The decrease in size of the multimers is accompanied by an increase in chaperone activity.

The protein localises to the cytoplasm. In terms of biological role, associates with aggregated proteins, together with IbpA, to stabilize and protect them from irreversible denaturation and extensive proteolysis during heat shock and oxidative stress. Aggregated proteins bound to the IbpAB complex are more efficiently refolded and reactivated by the ATP-dependent chaperone systems ClpB and DnaK/DnaJ/GrpE. Its activity is ATP-independent. The sequence is that of Small heat shock protein IbpB from Pectobacterium atrosepticum (strain SCRI 1043 / ATCC BAA-672) (Erwinia carotovora subsp. atroseptica).